The primary structure comprises 146 residues: D-aminoacyl-tRNA deacylase (146 aa).

The Gly-cisPro motif, important for rejection of L-amino acids motif lies at 137 to 138 (GP).

It belongs to the DTD family. As to quaternary structure, homodimer.

The protein resides in the cytoplasm. The enzyme catalyses glycyl-tRNA(Ala) + H2O = tRNA(Ala) + glycine + H(+). It carries out the reaction a D-aminoacyl-tRNA + H2O = a tRNA + a D-alpha-amino acid + H(+). Its function is as follows. An aminoacyl-tRNA editing enzyme that deacylates mischarged D-aminoacyl-tRNAs. Also deacylates mischarged glycyl-tRNA(Ala), protecting cells against glycine mischarging by AlaRS. Acts via tRNA-based rather than protein-based catalysis; rejects L-amino acids rather than detecting D-amino acids in the active site. By recycling D-aminoacyl-tRNA to D-amino acids and free tRNA molecules, this enzyme counteracts the toxicity associated with the formation of D-aminoacyl-tRNA entities in vivo and helps enforce protein L-homochirality. The polypeptide is D-aminoacyl-tRNA deacylase (Cellvibrio japonicus (strain Ueda107) (Pseudomonas fluorescens subsp. cellulosa)).